Consider the following 623-residue polypeptide: MNNGGPTEMYYQQHMQSAGQPQQPQTVTSGPMSHYPPAQPPLLQPGQPYSHGAPSPYQYGYANGMASPSGGPVPSNLPSNQPVLPLPGVGGQGAMPAHYSFDTTGQHPPPGMKPRVTATLWEDEGSLCFQVEARGICVARREDNHMINGTKLLNVAGMTRGRRDGILKSEKVRHVVKIGPMHLKGVWIPYERALDFANKEKITELLYPLFVHNIGALLYHPTNQTRTSQVMAAAERRKQDQGQMRTPPAGLPSIQHQPHNSMALPGPQSSLPSNNMARPPLDRAATFPTPPTTASSVMPNMGSTDNFNWQGQSMNGNQGTNAIAIDANLGHARSMPTTPATTPPGSMQPYGSAQSFDGSRQQMYNAPSQQSPYPASNGAHDRMYGQGNSYAKNDMGPPSSRPSGSAPSGEHEHKGSNGILPSEHGHQSHAGEEDGEHEQHDAEYTHDSGAYDSNRPSYNYTAPGVGSLAGDANNVDPSMTGSPNHPPASGRATPRTAAQPQPYYHNSGYGASPRVQQAPGFYNGVGGDRPAVNGGSGSDVYAPPADMANPMPNGYAPAPQVPNGVSGVKRGREGDDDLSRPVGDVPGMDMKRRKTLESSMPAPPFDSMSGRTAPTIGGDPRQR.

The span at 13 to 31 (QHMQSAGQPQQPQTVTSGP) shows a compositional bias: polar residues. The segment at 13 to 111 (QHMQSAGQPQ…DTTGQHPPPG (99 aa)) is disordered. Residues 115 to 221 (RVTATLWEDE…HNIGALLYHP (107 aa)) form the HTH APSES-type domain. A DNA-binding region (H-T-H motif) is located at residues 149–170 (GTKLLNVAGMTRGRRDGILKSE). 2 disordered regions span residues 232 to 270 (AAAE…PQSS) and 332 to 623 (ARSM…PRQR). A compositionally biased stretch (polar residues) spans 335–374 (MPTTPATTPPGSMQPYGSAQSFDGSRQQMYNAPSQQSPYP). The segment covering 396 to 408 (GPPSSRPSGSAPS) has biased composition (low complexity). Positions 423-446 (EHGHQSHAGEEDGEHEQHDAEYTH) are enriched in basic and acidic residues. Residues 542 to 553 (APPADMANPMPN) show a composition bias toward low complexity. Residues 569 to 594 (KRGREGDDDLSRPVGDVPGMDMKRRK) are nuclear localization domain. Residues 570–579 (RGREGDDDLS) are compositionally biased toward basic and acidic residues.

Belongs to the EFG1/PHD1/stuA family.

Its subcellular location is the nucleus. Its function is as follows. Transcription factor that regulates asexual reproduction. Binds the StuA-response elements (StRE) with the consensus sequence 5'-(A/T)CGCG(T/A)N(A/C)-3' at the promoters of target genes. Controls conidiation by positively regulating the expression of brlA and abaA. Positively regulates the cephalosporin biosynthesis gene cluster. Also involved hyphal fragmentation and cell wall integrity. This chain is Cell pattern formation-associated protein stuA, found in Hapsidospora chrysogenum (strain ATCC 11550 / CBS 779.69 / DSM 880 / IAM 14645 / JCM 23072 / IMI 49137) (Acremonium chrysogenum).